Consider the following 238-residue polypeptide: Purine nucleoside phosphorylase DeoD-type (238 aa).

Residue histidine 4 coordinates a purine D-ribonucleoside. Phosphate-binding positions include glycine 20, arginine 24, arginine 43, and 87-90 (RVGS). A purine D-ribonucleoside is bound by residues 179–181 (EME) and 203–204 (SD). Aspartate 204 functions as the Proton donor in the catalytic mechanism.

Belongs to the PNP/UDP phosphorylase family. Homohexamer; trimer of homodimers.

The enzyme catalyses a purine D-ribonucleoside + phosphate = a purine nucleobase + alpha-D-ribose 1-phosphate. It catalyses the reaction a purine 2'-deoxy-D-ribonucleoside + phosphate = a purine nucleobase + 2-deoxy-alpha-D-ribose 1-phosphate. Its function is as follows. Catalyzes the reversible phosphorolytic breakdown of the N-glycosidic bond in the beta-(deoxy)ribonucleoside molecules, with the formation of the corresponding free purine bases and pentose-1-phosphate. The sequence is that of Purine nucleoside phosphorylase DeoD-type from Haemophilus influenzae (strain PittGG).